A 467-amino-acid polypeptide reads, in one-letter code: Argininosuccinate lyase (467 aa).

It belongs to the lyase 1 family. Argininosuccinate lyase subfamily.

The protein resides in the cytoplasm. The catalysed reaction is 2-(N(omega)-L-arginino)succinate = fumarate + L-arginine. It participates in amino-acid biosynthesis; L-arginine biosynthesis; L-arginine from L-ornithine and carbamoyl phosphate: step 3/3. This chain is Argininosuccinate lyase, found in Nitrosococcus oceani (strain ATCC 19707 / BCRC 17464 / JCM 30415 / NCIMB 11848 / C-107).